The sequence spans 398 residues: Acetate kinase (398 aa).

Mg(2+) is bound at residue asparagine 8. Lysine 15 contributes to the ATP binding site. Position 89 (arginine 89) interacts with substrate. Aspartate 146 (proton donor/acceptor) is an active-site residue. ATP contacts are provided by residues histidine 206–glycine 210, aspartate 283–arginine 285, and glycine 331–asparagine 335. Residue glutamate 383 participates in Mg(2+) binding.

Belongs to the acetokinase family. As to quaternary structure, homodimer. It depends on Mg(2+) as a cofactor. Mn(2+) is required as a cofactor.

The protein resides in the cytoplasm. The enzyme catalyses acetate + ATP = acetyl phosphate + ADP. It functions in the pathway metabolic intermediate biosynthesis; acetyl-CoA biosynthesis; acetyl-CoA from acetate: step 1/2. Its function is as follows. Catalyzes the formation of acetyl phosphate from acetate and ATP. Can also catalyze the reverse reaction. In Streptococcus pyogenes serotype M5 (strain Manfredo), this protein is Acetate kinase.